We begin with the raw amino-acid sequence, 120 residues long: UPF0295 protein Exig_0660 (120 aa).

The next 2 helical transmembrane spans lie at 16–36 and 41–61; these read AMFL…LKQF and VILM…YFLI.

This sequence belongs to the UPF0295 family.

The protein resides in the cell membrane. The chain is UPF0295 protein Exig_0660 from Exiguobacterium sibiricum (strain DSM 17290 / CCUG 55495 / CIP 109462 / JCM 13490 / 255-15).